Here is a 172-residue protein sequence, read N- to C-terminus: 3-hydroxydecanoyl-[acyl-carrier-protein] dehydratase (172 aa).

The active site involves histidine 70.

This sequence belongs to the thioester dehydratase family. FabA subfamily. In terms of assembly, homodimer.

It localises to the cytoplasm. The enzyme catalyses a (3R)-hydroxyacyl-[ACP] = a (2E)-enoyl-[ACP] + H2O. The catalysed reaction is (3R)-hydroxydecanoyl-[ACP] = (2E)-decenoyl-[ACP] + H2O. It carries out the reaction (2E)-decenoyl-[ACP] = (3Z)-decenoyl-[ACP]. It functions in the pathway lipid metabolism; fatty acid biosynthesis. In terms of biological role, necessary for the introduction of cis unsaturation into fatty acids. Catalyzes the dehydration of (3R)-3-hydroxydecanoyl-ACP to E-(2)-decenoyl-ACP and then its isomerization to Z-(3)-decenoyl-ACP. Can catalyze the dehydratase reaction for beta-hydroxyacyl-ACPs with saturated chain lengths up to 16:0, being most active on intermediate chain length. The protein is 3-hydroxydecanoyl-[acyl-carrier-protein] dehydratase of Xylella fastidiosa (strain M12).